Reading from the N-terminus, the 242-residue chain is Phosphoribosylaminoimidazole-succinocarboxamide synthase (242 aa).

This sequence belongs to the SAICAR synthetase family.

The catalysed reaction is 5-amino-1-(5-phospho-D-ribosyl)imidazole-4-carboxylate + L-aspartate + ATP = (2S)-2-[5-amino-1-(5-phospho-beta-D-ribosyl)imidazole-4-carboxamido]succinate + ADP + phosphate + 2 H(+). Its pathway is purine metabolism; IMP biosynthesis via de novo pathway; 5-amino-1-(5-phospho-D-ribosyl)imidazole-4-carboxamide from 5-amino-1-(5-phospho-D-ribosyl)imidazole-4-carboxylate: step 1/2. In Cyanothece sp. (strain PCC 7425 / ATCC 29141), this protein is Phosphoribosylaminoimidazole-succinocarboxamide synthase.